A 687-amino-acid chain; its full sequence is Histone deacetylase clr3 (687 aa).

The segment at 55–385 (KKSGLCYDPR…ALAVAQSLLG (331 aa)) is histone deacetylase. The active site involves His195.

This sequence belongs to the histone deacetylase family. HD type 2 subfamily. As to quaternary structure, interacts with ccq1, clr1, clr2 and mit1.

The protein resides in the nucleus. It localises to the chromosome. It is found in the centromere. The protein localises to the telomere. The catalysed reaction is N(6)-acetyl-L-lysyl-[histone] + H2O = L-lysyl-[histone] + acetate. Its function is as follows. Responsible for the deacetylation of lysine residues on the N-terminal part of the core histones (H2A, H2B, H3 and H4). Histone deacetylation gives a tag for epigenetic repression and plays an important role in transcriptional regulation, cell cycle progression and developmental events. Histone deacetylases act via the formation of large multiprotein complexes. Required for proper positioning of nucleosomes at heterochromatic loci and for transcriptional gene silencing (TGS) function of the Snf2/Hdac-containing repressor complex (SHREC). The protein is Histone deacetylase clr3 (clr3) of Schizosaccharomyces pombe (strain 972 / ATCC 24843) (Fission yeast).